A 759-amino-acid polypeptide reads, in one-letter code: Forkhead box protein M1 (759 aa).

Disordered stretches follow at residues 1-54 (MRTS…AESS) and 94-165 (KGKE…QRQE). Residues 36–54 (PGQQEPTQAQASQDVAESS) show a composition bias toward polar residues. Low complexity predominate over residues 141 to 151 (LGPKPGAKGVP). Glycyl lysine isopeptide (Lys-Gly) (interchain with G-Cter in SUMO2) cross-links involve residues Lys200 and Lys324. The segment at residues 234 to 326 (ERPPYSYMAM…LTLDQVFKPL (93 aa)) is a DNA-binding region (fork-head). Residues 328 to 349 (PGSPQSPEHLESQQKRPNPELR) are disordered. At Ser330 the chain carries Phosphoserine. Residues 335 to 349 (EHLESQQKRPNPELR) show a composition bias toward basic and acidic residues. Lys355 is covalently cross-linked (Glycyl lysine isopeptide (Lys-Gly) (interchain with G-Cter in SUMO2)). The residue at position 375 (Ser375) is a Phosphoserine; by CHEK2. Residues Lys421 and Lys439 each participate in a glycyl lysine isopeptide (Lys-Gly) (interchain with G-Cter in SUMO2) cross-link. The residue at position 521 (Ser521) is a Phosphoserine. Disordered stretches follow at residues 530–556 (LVTK…CLDE), 572–643 (MEIL…PQGA), and 681–706 (LASD…LQVP). Residues 531–542 (VTKRREKREVSR) are compositionally biased toward basic and acidic residues. The span at 604 to 613 (PVSSTPSKSV) shows a compositional bias: polar residues. Thr608 bears the Phosphothreonine; by CDK1 mark. The residue at position 624 (Thr624) is a Phosphothreonine. Phosphoserine; by PLK1 occurs at positions 726 and 735.

Post-translationally, phosphorylated in M (mitotic) phase. Phosphorylation by the checkpoint kinase CHEK2 in response to DNA damage increases the FOXM1 protein stability probably stimulating the transcription of genes involved in DNA repair. Phosphorylated by CDK1 in late S and G2 phases, creating docking sites for the POLO box domains of PLK1. Subsequently, PLK1 binds and phosphorylates FOXM1, leading to activation of transcriptional activity and subsequent enhanced expression of key mitotic regulators. Phosphorylated by GSK3B leading to ubiquitination and proteasomal degradation. In terms of tissue distribution, highly expressed in thymus and testis, but weakly in intestine and lung. Appears to be expressed only in adult organs containing proliferating/cycling cells or in response to growth factors.

It is found in the nucleus. Functionally, transcription factor regulating the expression of cell cycle genes essential for DNA replication and mitosis. Plays a role in the control of cell proliferation. Also plays a role in DNA break repair, participating in the DNA damage checkpoint response. Promotes transcription of PHB2. This Rattus norvegicus (Rat) protein is Forkhead box protein M1 (Foxm1).